A 238-amino-acid chain; its full sequence is Uridylate kinase (238 aa).

An ATP-binding site is contributed by 12–15 (KLSG). UMP is bound at residue Gly-54. 2 residues coordinate ATP: Gly-55 and Arg-59. Residues Asp-74 and 135–142 (TGNPYFTT) each bind UMP. Positions 162, 168, and 171 each coordinate ATP.

This sequence belongs to the UMP kinase family. In terms of assembly, homohexamer.

The protein resides in the cytoplasm. It carries out the reaction UMP + ATP = UDP + ADP. Its pathway is pyrimidine metabolism; CTP biosynthesis via de novo pathway; UDP from UMP (UMPK route): step 1/1. Its activity is regulated as follows. Inhibited by UTP. Functionally, catalyzes the reversible phosphorylation of UMP to UDP. This Nitratidesulfovibrio vulgaris (strain ATCC 29579 / DSM 644 / CCUG 34227 / NCIMB 8303 / VKM B-1760 / Hildenborough) (Desulfovibrio vulgaris) protein is Uridylate kinase.